Consider the following 427-residue polypeptide: tRNA(Ile)-lysidine synthase (427 aa).

An ATP-binding site is contributed by 21 to 26 (SGGADS).

The protein belongs to the tRNA(Ile)-lysidine synthase family.

It is found in the cytoplasm. It carries out the reaction cytidine(34) in tRNA(Ile2) + L-lysine + ATP = lysidine(34) in tRNA(Ile2) + AMP + diphosphate + H(+). Its function is as follows. Ligates lysine onto the cytidine present at position 34 of the AUA codon-specific tRNA(Ile) that contains the anticodon CAU, in an ATP-dependent manner. Cytidine is converted to lysidine, thus changing the amino acid specificity of the tRNA from methionine to isoleucine. This Actinobacillus succinogenes (strain ATCC 55618 / DSM 22257 / CCUG 43843 / 130Z) protein is tRNA(Ile)-lysidine synthase.